The following is a 199-amino-acid chain: Recombination protein RecR (199 aa).

The C4-type zinc finger occupies 57–72; that stretch reads CTVCGHITDIDPCAIC. Residues 80–176 enclose the Toprim domain; sequence TVVCVVQDSR…RVTRLAHGLP (97 aa).

It belongs to the RecR family.

Functionally, may play a role in DNA repair. It seems to be involved in an RecBC-independent recombinational process of DNA repair. It may act with RecF and RecO. The chain is Recombination protein RecR from Exiguobacterium sp. (strain ATCC BAA-1283 / AT1b).